Consider the following 638-residue polypeptide: DNA mismatch repair protein MutL (638 aa).

The segment at 398–435 is disordered; that stretch reads GREGTSFGTQTNAFGSMATPRDNSRGSYSAGESRQRTE.

Belongs to the DNA mismatch repair MutL/HexB family.

This protein is involved in the repair of mismatches in DNA. It is required for dam-dependent methyl-directed DNA mismatch repair. May act as a 'molecular matchmaker', a protein that promotes the formation of a stable complex between two or more DNA-binding proteins in an ATP-dependent manner without itself being part of a final effector complex. This is DNA mismatch repair protein MutL from Shewanella baltica (strain OS155 / ATCC BAA-1091).